Reading from the N-terminus, the 690-residue chain is Elongation factor G (690 aa).

A tr-type G domain is found at 8-283; that stretch reads EKYRNIGIMA…AVVDYLPSPL (276 aa). GTP-binding positions include 17 to 24, 81 to 85, and 135 to 138; these read AHIDAGKT, DTPGH, and NKLD.

This sequence belongs to the TRAFAC class translation factor GTPase superfamily. Classic translation factor GTPase family. EF-G/EF-2 subfamily.

It is found in the cytoplasm. Catalyzes the GTP-dependent ribosomal translocation step during translation elongation. During this step, the ribosome changes from the pre-translocational (PRE) to the post-translocational (POST) state as the newly formed A-site-bound peptidyl-tRNA and P-site-bound deacylated tRNA move to the P and E sites, respectively. Catalyzes the coordinated movement of the two tRNA molecules, the mRNA and conformational changes in the ribosome. This chain is Elongation factor G, found in Rhizorhabdus wittichii (strain DSM 6014 / CCUG 31198 / JCM 15750 / NBRC 105917 / EY 4224 / RW1) (Sphingomonas wittichii).